The primary structure comprises 180 residues: GTP cyclohydrolase 1 (180 aa).

The Zn(2+) site is built by cysteine 71, histidine 74, and cysteine 142.

This sequence belongs to the GTP cyclohydrolase I family. In terms of assembly, toroid-shaped homodecamer, composed of two pentamers of five dimers.

The enzyme catalyses GTP + H2O = 7,8-dihydroneopterin 3'-triphosphate + formate + H(+). It functions in the pathway cofactor biosynthesis; 7,8-dihydroneopterin triphosphate biosynthesis; 7,8-dihydroneopterin triphosphate from GTP: step 1/1. The chain is GTP cyclohydrolase 1 from Helicobacter acinonychis (strain Sheeba).